The primary structure comprises 451 residues: UDP-N-acetylmuramoylalanine--D-glutamate ligase (451 aa).

Position 118–124 (118–124 (GSNGKTT)) interacts with ATP.

It belongs to the MurCDEF family.

It localises to the cytoplasm. The catalysed reaction is UDP-N-acetyl-alpha-D-muramoyl-L-alanine + D-glutamate + ATP = UDP-N-acetyl-alpha-D-muramoyl-L-alanyl-D-glutamate + ADP + phosphate + H(+). It functions in the pathway cell wall biogenesis; peptidoglycan biosynthesis. Its function is as follows. Cell wall formation. Catalyzes the addition of glutamate to the nucleotide precursor UDP-N-acetylmuramoyl-L-alanine (UMA). The polypeptide is UDP-N-acetylmuramoylalanine--D-glutamate ligase (Shouchella clausii (strain KSM-K16) (Alkalihalobacillus clausii)).